We begin with the raw amino-acid sequence, 218 residues long: Ribonuclease HII (218 aa).

An RNase H type-2 domain is found at 13-202 (DLVAGVDEVG…VRAAHEARAT (190 aa)). A divalent metal cation contacts are provided by Asp-19, Glu-20, and Asp-111.

This sequence belongs to the RNase HII family. Mn(2+) serves as cofactor. The cofactor is Mg(2+).

It localises to the cytoplasm. It carries out the reaction Endonucleolytic cleavage to 5'-phosphomonoester.. Functionally, endonuclease that specifically degrades the RNA of RNA-DNA hybrids. The sequence is that of Ribonuclease HII from Pseudomonas syringae pv. syringae (strain B728a).